Reading from the N-terminus, the 1005-residue chain is Retinoblastoma-related protein (1005 aa).

The domain A stretch occupies residues 404–605; that stretch reads TPVSTAMTTA…EKGSSMYNSL (202 aa). Residues 404–853 form a pocket region; that stretch reads TPVSTAMTTA…NEIFIPSVKP (450 aa). A spacer region spans residues 606–722; that stretch reads TIARPNLSNE…HPTRGETCAE (117 aa). Residues 723 to 853 form a domain B region; it reads TAVNLFFSKI…NEIFIPSVKP (131 aa). Residues 863 to 873 are compositionally biased toward polar residues; sequence VPKNPNNQVSE. The interval 863–899 is disordered; sequence VPKNPNNQVSETNKKDESGPCPCPGSPKVSSFPSLPD.

This sequence belongs to the retinoblastoma protein (RB) family.

It is found in the nucleus. In terms of biological role, regulator of biological processes that recruits a histone deacetylase to control gene transcription. May play a role in the entry into mitosis, negatively regulating the cell proliferation. Formation of stable complexes with geminiviridae replication-associated proteins may create a cellular environment which favors viral DNA replication. The polypeptide is Retinoblastoma-related protein (RBR) (Pilosella piloselloides (Glaucous king-devil hawkweed)).